The sequence spans 788 residues: 5-methyltetrahydropteroyltriglutamate--homocysteine methyltransferase (788 aa).

5-methyltetrahydropteroyltri-L-glutamate-binding positions include 24-27 and Lys140; that span reads RELK. L-homocysteine contacts are provided by residues 463 to 465 and Glu516; that span reads IGS. Residues 463-465 and Glu516 each bind L-methionine; that span reads IGS. 5-methyltetrahydropteroyltri-L-glutamate contacts are provided by residues 547–548 and Trp593; that span reads RC. Asp631 serves as a coordination point for L-homocysteine. Residue Asp631 participates in L-methionine binding. Glu637 provides a ligand contact to 5-methyltetrahydropteroyltri-L-glutamate. Zn(2+)-binding residues include His673, Cys675, and Glu697. The Proton donor role is filled by His726. Zn(2+) is bound at residue Cys758.

The protein belongs to the vitamin-B12 independent methionine synthase family. Requires Zn(2+) as cofactor.

It catalyses the reaction 5-methyltetrahydropteroyltri-L-glutamate + L-homocysteine = tetrahydropteroyltri-L-glutamate + L-methionine. It participates in amino-acid biosynthesis; L-methionine biosynthesis via de novo pathway; L-methionine from L-homocysteine (MetE route): step 1/1. Catalyzes the transfer of a methyl group from 5-methyltetrahydrofolate to homocysteine resulting in methionine formation. The polypeptide is 5-methyltetrahydropteroyltriglutamate--homocysteine methyltransferase (Rhodopseudomonas palustris (strain ATCC BAA-98 / CGA009)).